The primary structure comprises 232 residues: Endonuclease NucS (232 aa).

This sequence belongs to the NucS endonuclease family.

Its subcellular location is the cytoplasm. Functionally, cleaves both 3' and 5' ssDNA extremities of branched DNA structures. In Mycobacteroides abscessus (strain ATCC 19977 / DSM 44196 / CCUG 20993 / CIP 104536 / JCM 13569 / NCTC 13031 / TMC 1543 / L948) (Mycobacterium abscessus), this protein is Endonuclease NucS.